The sequence spans 175 residues: Adenine phosphoribosyltransferase (175 aa).

The protein belongs to the purine/pyrimidine phosphoribosyltransferase family. As to quaternary structure, homodimer.

The protein resides in the cytoplasm. The catalysed reaction is AMP + diphosphate = 5-phospho-alpha-D-ribose 1-diphosphate + adenine. It functions in the pathway purine metabolism; AMP biosynthesis via salvage pathway; AMP from adenine: step 1/1. Catalyzes a salvage reaction resulting in the formation of AMP, that is energically less costly than de novo synthesis. This Pelagibacter ubique (strain HTCC1062) protein is Adenine phosphoribosyltransferase.